The chain runs to 409 residues: MAFGKSLFHAIGRVSLVRQIAAGLALGIVIGSVSPQLGLAAGLFGSLFVGALKAVAPVLVFILVAATIAQHQKGNKAHIRPIIVLYLIGTFSAALTAVIAGMVFPTHIVLAGAGDVSAAPPSGIVEVLKSLLMNLVANPINAIANANYIGILAWALVLGAALRNHGSDVTRQVVADLAEAVSTVVKWIIRFAPLGIFGLVSSTIAETGFGALAGYAKLLAVLLGCMAFIALAVNPAIVWWKIRRNPYPLVFTCLRESGVYAFFTRSSAANIPVNMALAKKLGLHEDTYSISIPLGATVNMGGAAITITVLAMAAAHTQGIQVDFATALLLSLVATVSACGASGVAGGSLLLIPLACSLFGISNDVAMQVVAVGFIIGVIQDSAETALNSSTDVLFTAAADLGRQRNRAE.

The next 9 membrane-spanning stretches (helical) occupy residues leucine 24–phenylalanine 44, phenylalanine 48–isoleucine 68, isoleucine 82–methionine 102, alanine 142–leucine 162, leucine 194–glycine 214, leucine 218–valine 238, isoleucine 292–methionine 312, glycine 319–cysteine 339, and valine 365–threonine 385.

Belongs to the dicarboxylate/amino acid:cation symporter (DAACS) (TC 2.A.23) family.

The protein localises to the cell inner membrane. It carries out the reaction L-serine(in) + Na(+)(in) = L-serine(out) + Na(+)(out). The catalysed reaction is L-threonine(in) + Na(+)(in) = L-threonine(out) + Na(+)(out). In terms of biological role, involved in the import of serine and threonine into the cell, with the concomitant import of sodium (symport system). This chain is Serine/threonine transporter SstT, found in Neisseria gonorrhoeae (strain NCCP11945).